A 186-amino-acid polypeptide reads, in one-letter code: TATA-box-binding protein D (186 aa).

2 repeat units span residues 10-86 (IENV…VEDL) and 101-179 (VQNI…HERL).

The protein belongs to the TBP family.

Its function is as follows. General factor that plays a role in the activation of archaeal genes transcribed by RNA polymerase. Binds specifically to the TATA box promoter element which lies close to the position of transcription initiation. This is TATA-box-binding protein D (tbpD) from Halobacterium salinarum (strain ATCC 700922 / JCM 11081 / NRC-1) (Halobacterium halobium).